The chain runs to 446 residues: Phosphoglucosamine mutase (446 aa).

S103 functions as the Phosphoserine intermediate in the catalytic mechanism. Mg(2+) contacts are provided by S103, D242, D244, and D246. At S103 the chain carries Phosphoserine.

The protein belongs to the phosphohexose mutase family. The cofactor is Mg(2+). In terms of processing, activated by phosphorylation.

It catalyses the reaction alpha-D-glucosamine 1-phosphate = D-glucosamine 6-phosphate. Catalyzes the conversion of glucosamine-6-phosphate to glucosamine-1-phosphate. The chain is Phosphoglucosamine mutase from Corynebacterium urealyticum (strain ATCC 43042 / DSM 7109).